The following is a 173-amino-acid chain: SPbeta prophage-derived putative HNH homing endonuclease YosQ (173 aa).

In terms of biological role, a possible homing endonuclease, it is entirely encoded within the YosP intron. This Bacillus subtilis (strain 168) protein is SPbeta prophage-derived putative HNH homing endonuclease YosQ (yosQ).